Reading from the N-terminus, the 445-residue chain is MSELTKELMELVWGTNSSPGLSDTIFCRWTQGFVFSESEGSALEQFEGGPCAVIAPVQAFLLKKLLFSSEKSSWRDCPEEERKELLCHTLCDILESAGCDNSGSYCLVSWLRGKTTEETASLSGSPAQSSCQVEHSSALAVEELGFERFHALIQKRSFRSLAELRDAVLDQYSMWGNKFGVLLFLYSVLLTKGIENIKNEIEDSSEPLIDPVYGHGSQSLINLLLTGHAVSNVWDGDRECSGMKLLGIHEQAAVGFLTLMEALRYCKVGSYLKSPKFPIWIVGSETHLTVFFAKDMALVAPEAPSEQARRVFQTYDPEDNGFIPDSLLEDVMKALDLVSDPEYINLMKNKLDPEGLGIILLGPFLQEFFPDQGSSGPESFTVYHYNGLKQSNYNEKVMYVEGTAVVMGFEDPLLQTDDTPIKRCLQTKWPYIELLWTTDRSPSLN.

The active-site Nucleophile is the C51. A Phosphoserine modification is found at S125. H287 acts as the Proton acceptor in catalysis.

It belongs to the MINDY deubiquitinase family. FAM188 subfamily. Interacts with COPS5.

The protein localises to the nucleus. The enzyme catalyses Thiol-dependent hydrolysis of ester, thioester, amide, peptide and isopeptide bonds formed by the C-terminal Gly of ubiquitin (a 76-residue protein attached to proteins as an intracellular targeting signal).. Functionally, hydrolase that can remove 'Lys-48'-linked conjugated ubiquitin from proteins. The protein is Ubiquitin carboxyl-terminal hydrolase MINDY-3 (MINDY3) of Bos taurus (Bovine).